Reading from the N-terminus, the 303-residue chain is Agmatinase (303 aa).

Positions 126, 149, 151, 153, 230, and 232 each coordinate Mn(2+).

Belongs to the arginase family. Agmatinase subfamily. It depends on Mn(2+) as a cofactor.

It catalyses the reaction agmatine + H2O = urea + putrescine. Its function is as follows. Catalyzes the formation of putrescine from agmatine. This Blochmanniella floridana protein is Agmatinase (speB).